Reading from the N-terminus, the 436-residue chain is ATP-dependent RNA helicase RhlB (436 aa).

The short motif at 9-37 (QKFADFPLHKEVHQALNEAGFEFCTPIQA) is the Q motif element. The Helicase ATP-binding domain occupies 40–219 (LPILLEKKDI…YDHMNEPEKV (180 aa)). 53 to 60 (AQTGTGKT) is an ATP binding site. Residues 165-168 (DEAD) carry the DEAD box motif. The region spanning 243-390 (KMPLLLSLLE…VTSYDSDALL (148 aa)) is the Helicase C-terminal domain. Residues 392-436 (DIPPPVRIHRKPSTHTRNTRDRGASRPQGGQRSGPRRHDRTRRHS) form a disordered region. Over residues 425–436 (GPRRHDRTRRHS) the composition is skewed to basic residues.

It belongs to the DEAD box helicase family. RhlB subfamily. As to quaternary structure, component of the RNA degradosome, which is a multiprotein complex involved in RNA processing and mRNA degradation.

It localises to the cytoplasm. It catalyses the reaction ATP + H2O = ADP + phosphate + H(+). DEAD-box RNA helicase involved in RNA degradation. Has RNA-dependent ATPase activity and unwinds double-stranded RNA. The chain is ATP-dependent RNA helicase RhlB from Shewanella halifaxensis (strain HAW-EB4).